The primary structure comprises 131 residues: Large ribosomal subunit protein uL14m (131 aa).

The protein belongs to the universal ribosomal protein uL14 family. As to quaternary structure, component of the mitochondrial large ribosomal subunit (mt-LSU). Mature N.crassa 74S mitochondrial ribosomes consist of a small (37S) and a large (54S) subunit. The 37S small subunit contains a 16S ribosomal RNA (16S mt-rRNA) and 32 different proteins. The 54S large subunit contains a 23S rRNA (23S mt-rRNA) and 42 different proteins.

The protein resides in the mitochondrion. In terms of biological role, component of the mitochondrial ribosome (mitoribosome), a dedicated translation machinery responsible for the synthesis of mitochondrial genome-encoded proteins, including at least some of the essential transmembrane subunits of the mitochondrial respiratory chain. The mitoribosomes are attached to the mitochondrial inner membrane and translation products are cotranslationally integrated into the membrane. The chain is Large ribosomal subunit protein uL14m (mrpl38) from Neurospora crassa (strain ATCC 24698 / 74-OR23-1A / CBS 708.71 / DSM 1257 / FGSC 987).